Consider the following 290-residue polypeptide: PIH1 domain-containing protein 1 (290 aa).

Over residues 34–50 (ELQQAQTSRPESTQIQP) the composition is skewed to polar residues. Residues 34 to 53 (ELQQAQTSRPESTQIQPQPG) form a disordered region. Ser173 is modified (phosphoserine).

It belongs to the PIH1 family. Component of the R2TP complex composed at least of RUVBL1, RUVBL2, RPAP3 and PIHD1. Component of the PAQosome complex which is responsible for the biogenesis of several protein complexes and which consists of R2TP complex members RUVBL1, RUVBL2, RPAP3 and PIH1D1, URI complex members PFDN2, PFDN6, PDRG1, UXT and URI1 as well as ASDURF, POLR2E and DNAAF10/WDR92. Interacts with phosphorylated TELO2 and mediates interaction of TELO2 with the R2TP complex. Interacts with phosphorylated ECD, EFTUD2/SNRP116, RPB1 and UBR5 and with RPB1 in a phosphorylation-independent manner. Interacts with the core C/D box snoRNP particle components NOP58 and FBL and with RUVBL1/TIP49. Interacts with RPAP3 and DNAAF10. Interacts with histone H4 and with SWI/SNF complex member SMARCB1/SNF5. Interacts with the mTORC1 complex member RPTOR. Interacts with MSL1.

It localises to the nucleus. In terms of biological role, involved in the assembly of C/D box small nucleolar ribonucleoprotein (snoRNP) particles. Recruits the SWI/SNF complex to the core promoter of rRNA genes and enhances pre-rRNA transcription. Mediates interaction of TELO2 with the R2TP complex which is necessary for the stability of MTOR and SMG1. Positively regulates the assembly and activity of the mTORC1 complex. The sequence is that of PIH1 domain-containing protein 1 (PIH1D1) from Bos taurus (Bovine).